The primary structure comprises 1043 residues: Calcium-transporting ATPase 1, plasma membrane-type (1043 aa).

Over methionine 1–threonine 178 the chain is Cytoplasmic. 2 consecutive transmembrane segments (helical) span residues leucine 179–tryptophan 199 and glycine 202–alanine 222. Residues serine 223–aspartate 258 are Cytoplasmic-facing. Helical transmembrane passes span isoleucine 259 to phenylalanine 279 and valine 356 to methionine 376. At alanine 377 to methionine 395 the chain is on the cytoplasmic side. Residues valine 396–valine 416 traverse the membrane as a helical segment. Aspartate 460 acts as the 4-aspartylphosphate intermediate in catalysis. Mg(2+)-binding residues include aspartate 761 and aspartate 765. The helical transmembrane segment at leucine 824–alanine 844 threads the bilayer. Proline 845 is a topological domain (cytoplasmic). 2 consecutive transmembrane segments (helical) span residues leucine 846–leucine 866 and valine 891–leucine 911. The Cytoplasmic portion of the chain corresponds to leucine 912–asparagine 955. A run of 2 helical transmembrane segments spans residues valine 956 to phenylalanine 976 and tryptophan 998 to isoleucine 1018. At proline 1019–valine 1043 the chain is on the cytoplasmic side. Residues glycine 1023–valine 1043 form a disordered region.

This sequence belongs to the cation transport ATPase (P-type) (TC 3.A.3) family. Type IIB subfamily.

It localises to the membrane. The enzyme catalyses Ca(2+)(in) + ATP + H2O = Ca(2+)(out) + ADP + phosphate + H(+). With respect to regulation, activated by calmodulin. This magnesium-dependent enzyme catalyzes the hydrolysis of ATP coupled with the translocation of calcium from the cytosol out of the cell, into the endoplasmic reticulum, or into organelles. In Oryza sativa subsp. japonica (Rice), this protein is Calcium-transporting ATPase 1, plasma membrane-type.